The primary structure comprises 222 residues: Glutathione S-transferase A4 (222 aa).

M1 bears the N-acetylmethionine mark. One can recognise a GST N-terminal domain in the interval 3-83 (TKPKLHYPNG…YIADKHHLFG (81 aa)). Glutathione is bound by residues Y9, 54 to 55 (QV), and 67 to 68 (QT). Residues 85-208 (DLKERTLIDM…EPGSKKKPPP (124 aa)) form the GST C-terminal domain.

This sequence belongs to the GST superfamily. Alpha family. In terms of assembly, homodimer.

It localises to the cytoplasm. The enzyme catalyses RX + glutathione = an S-substituted glutathione + a halide anion + H(+). Its function is as follows. Conjugation of reduced glutathione to a wide number of exogenous and endogenous hydrophobic electrophiles. The protein is Glutathione S-transferase A4 (GSTA4) of Bos taurus (Bovine).